The primary structure comprises 1071 residues: Carbamoyl phosphate synthase large chain (1071 aa).

Residues 1–399 (MPKREDIKKV…SLLKAFKSLD (399 aa)) are carboxyphosphate synthetic domain. Positions 129, 169, 175, 176, 208, 210, 215, 241, 242, 243, 284, and 296 each coordinate ATP. In terms of domain architecture, ATP-grasp 1 spans 133–325 (KETMLRIGEK…IARVTAKIAI (193 aa)). Q284, E296, and N298 together coordinate Mg(2+). Residues Q284, E296, and N298 each coordinate Mn(2+). The interval 400-540 (IDNQLGNKHW…YSTYEDSCET (141 aa)) is oligomerization domain. Positions 541-932 (NATTDKKKIL…YKAELAADNV (392 aa)) are carbamoyl phosphate synthetic domain. Residues 673 to 864 (YILMKELGVP…LAKIAAKVIA (192 aa)) enclose the ATP-grasp 2 domain. Residues R709, D748, L750, E755, G780, V781, H782, S783, Q823, and E835 each coordinate ATP. 3 residues coordinate Mg(2+): Q823, E835, and N837. Q823, E835, and N837 together coordinate Mn(2+). One can recognise an MGS-like domain in the interval 931–1071 (NVLPLTGKVF…INEYHKEMEN (141 aa)). The segment at 933–1071 (LPLTGKVFLS…INEYHKEMEN (139 aa)) is allosteric domain.

It belongs to the CarB family. Composed of two chains; the small (or glutamine) chain promotes the hydrolysis of glutamine to ammonia, which is used by the large (or ammonia) chain to synthesize carbamoyl phosphate. Tetramer of heterodimers (alpha,beta)4. Requires Mg(2+) as cofactor. The cofactor is Mn(2+).

The catalysed reaction is hydrogencarbonate + L-glutamine + 2 ATP + H2O = carbamoyl phosphate + L-glutamate + 2 ADP + phosphate + 2 H(+). It carries out the reaction hydrogencarbonate + NH4(+) + 2 ATP = carbamoyl phosphate + 2 ADP + phosphate + 2 H(+). The protein operates within amino-acid biosynthesis; L-arginine biosynthesis; carbamoyl phosphate from bicarbonate: step 1/1. Its pathway is pyrimidine metabolism; UMP biosynthesis via de novo pathway; (S)-dihydroorotate from bicarbonate: step 1/3. Large subunit of the glutamine-dependent carbamoyl phosphate synthetase (CPSase). CPSase catalyzes the formation of carbamoyl phosphate from the ammonia moiety of glutamine, carbonate, and phosphate donated by ATP, constituting the first step of 2 biosynthetic pathways, one leading to arginine and/or urea and the other to pyrimidine nucleotides. The large subunit (synthetase) binds the substrates ammonia (free or transferred from glutamine from the small subunit), hydrogencarbonate and ATP and carries out an ATP-coupled ligase reaction, activating hydrogencarbonate by forming carboxy phosphate which reacts with ammonia to form carbamoyl phosphate. The polypeptide is Carbamoyl phosphate synthase large chain (Methanosarcina barkeri (strain Fusaro / DSM 804)).